We begin with the raw amino-acid sequence, 869 residues long: Dynamin-3 (869 aa).

A Dynamin-type G domain is found at Leu28–Pro294. Residues Gly38–Ser45 are G1 motif. Gly38 to Ser46 contributes to the GTP binding site. The G2 motif stretch occupies residues Val64–Arg66. The interval Asp136–Gly139 is G3 motif. The G4 motif stretch occupies residues Thr205 to Asp208. Thr205–Asp211 is a binding site for GTP. At Tyr231 the chain carries Phosphotyrosine. Residues Val235 to Ser238 are G5 motif. Asn236–Gln239 provides a ligand contact to GTP. The residue at position 299 (Lys299) is an N6-acetyllysine. Residues Gln515 to Ser621 enclose the PH domain. Tyr603 carries the phosphotyrosine modification. At Lys604 the chain carries N6-acetyllysine. Residues Val659–Val750 enclose the GED domain. Residues Thr747–Asp869 are disordered. Phosphoserine occurs at positions 769 and 773. Composition is skewed to pro residues over residues Pro797 to Pro822 and Pro832 to Thr855. At Ser853 the chain carries Phosphoserine.

The protein belongs to the TRAFAC class dynamin-like GTPase superfamily. Dynamin/Fzo/YdjA family.

The protein resides in the cytoplasm. The protein localises to the cytoskeleton. The catalysed reaction is GTP + H2O = GDP + phosphate + H(+). Its function is as follows. Microtubule-associated force-producing protein involved in producing microtubule bundles and able to bind and hydrolyze GTP. Most probably involved in vesicular trafficking processes, in particular endocytosis. The chain is Dynamin-3 (DNM3) from Homo sapiens (Human).